A 209-amino-acid polypeptide reads, in one-letter code: Redox-sensing transcriptional repressor Rex (209 aa).

Positions 16–55 (LYYRFIQNLSLSGKQRVSSAELSEAVKVDSATIRRDFSYF) form a DNA-binding region, H-T-H motif. NAD(+) is bound at residue 90-95 (GVGNLG).

This sequence belongs to the transcriptional regulatory Rex family. As to quaternary structure, homodimer.

The protein localises to the cytoplasm. Functionally, modulates transcription in response to changes in cellular NADH/NAD(+) redox state. This is Redox-sensing transcriptional repressor Rex from Bacillus cereus (strain ATCC 10987 / NRS 248).